The chain runs to 156 residues: Small ribosomal subunit protein uS7 (156 aa).

This sequence belongs to the universal ribosomal protein uS7 family. In terms of assembly, part of the 30S ribosomal subunit. Contacts proteins S9 and S11.

Functionally, one of the primary rRNA binding proteins, it binds directly to 16S rRNA where it nucleates assembly of the head domain of the 30S subunit. Is located at the subunit interface close to the decoding center, probably blocks exit of the E-site tRNA. The protein is Small ribosomal subunit protein uS7 of Salinispora tropica (strain ATCC BAA-916 / DSM 44818 / JCM 13857 / NBRC 105044 / CNB-440).